Consider the following 501-residue polypeptide: Ammonium transporter 1 member 1 (501 aa).

10 consecutive transmembrane segments (helical) span residues 8 to 28, 46 to 66, 81 to 101, 128 to 148, 152 to 172, 199 to 219, 243 to 263, 333 to 353, 366 to 386, and 419 to 439; these read LAVL…GQLG, LLFS…LCAG, VLDA…FAFG, FLYQ…SIAE, FVAY…VVSH, FAGS…GALI, LVVL…PGSF, VVEP…LLGC, LEAA…TALF, and LIQI…LFFI. Thr-460 carries the phosphothreonine modification. Residues Ser-475, Ser-488, Ser-490, and Ser-492 each carry the phosphoserine modification.

Belongs to the ammonia transporter channel (TC 1.A.11.2) family. Self interacts. Interacts with the receptor protein kinases CEPR2, At2g28990 and PAM74. As to expression, highly expressed in roots. Expressed in root tips, root hairs, root epidermis, rhizodermis, cortex and pericycle. Expressed in leaves epidermal and mesophyll cells.

The protein localises to the cell membrane. In terms of biological role, high affinity ammonium transporter probably involved in ammonium uptake from the soil, long-distance transport to the shoots and re-uptake of apoplastic ammonium that derives from photorespiration in shoots. Contributes with AMT1-3 to the overall ammonium uptake capacity in roots under nitrogen-deficiency conditions. The chain is Ammonium transporter 1 member 1 (AMT1-1) from Arabidopsis thaliana (Mouse-ear cress).